The following is a 339-amino-acid chain: D-erythrose-4-phosphate dehydrogenase (339 aa).

An NAD(+)-binding site is contributed by 12-13 (RI). Substrate-binding positions include 154-156 (SCT), arginine 200, 213-214 (TK), and arginine 236. Cysteine 155 serves as the catalytic Nucleophile. Asparagine 318 lines the NAD(+) pocket.

The protein belongs to the glyceraldehyde-3-phosphate dehydrogenase family. Epd subfamily. Homotetramer.

The protein localises to the cytoplasm. It catalyses the reaction D-erythrose 4-phosphate + NAD(+) + H2O = 4-phospho-D-erythronate + NADH + 2 H(+). The protein operates within cofactor biosynthesis; pyridoxine 5'-phosphate biosynthesis; pyridoxine 5'-phosphate from D-erythrose 4-phosphate: step 1/5. Functionally, catalyzes the NAD-dependent conversion of D-erythrose 4-phosphate to 4-phosphoerythronate. The polypeptide is D-erythrose-4-phosphate dehydrogenase (Photorhabdus laumondii subsp. laumondii (strain DSM 15139 / CIP 105565 / TT01) (Photorhabdus luminescens subsp. laumondii)).